The chain runs to 135 residues: Histone H3 type 3 (135 aa).

Positions 1–40 are disordered; sequence MARTKQTARKSTGGKAPRKQLATKAARKTPATGGVKKPHR. Lysine 5 is modified (N6-methyllysine). N6-acetyllysine; alternate is present on lysine 10. Lysine 10 is subject to N6-methyllysine; alternate. A Phosphoserine modification is found at serine 11. Threonine 12 carries the phosphothreonine modification. An N6-acetyllysine mark is found at lysine 15, lysine 19, and lysine 24. Lysine 28 bears the N6-acetyllysine; alternate mark. An N6-methyllysine; alternate modification is found at lysine 28. 2 positions are modified to N6-methyllysine: lysine 36 and lysine 37.

The protein belongs to the histone H3 family. As to quaternary structure, the nucleosome is a histone octamer containing two molecules each of H2A, H2B, H3 and H4 assembled in one H3-H4 heterotetramer and two H2A-H2B heterodimers. The octamer wraps approximately 147 bp of DNA. In terms of processing, acetylation is generally linked to gene activation. Acetylated to form H3K9ac (11%), H3K14ac (17%), H3K18ac (11%), H3K23ac (16%) and H3K27ac (7%). H3K4, H3K35 and H3K36 are not acetylated. H3K4me prevents acetylation. 32% of the histone H3 are acetylated with, on average, 2.4 acetyl-Lys. They are all continuously deacatylated and re-acetylated with a half-life of approximately 2 minutes. Post-translationally, monomethylated to form H3K4me1 (81%), H3K9me1 (16%), H3K27me1 (25%), H3K35me1 (25%) and H3K36me1 (5%). No methylation at H3K14, H3K18 and H3K23. Methylated by a protein complex that includes Mut11. Set1 methylates specifically H3K4. H3K4me1 is associated with silenced euchromatin. Set3 forms H3K9me1, while H3K9me2 is undetected. H3K9me1 is specifically associated with silent, multi-copy transgenes. No phosphorylation detected.

The protein resides in the nucleus. The protein localises to the chromosome. Core component of nucleosome. Nucleosomes wrap and compact DNA into chromatin, limiting DNA accessibility to the cellular machineries which require DNA as a template. Histones thereby play a central role in transcription regulation, DNA repair, DNA replication and chromosomal stability. DNA accessibility is regulated via a complex set of post-translational modifications of histones, also called histone code, and nucleosome remodeling. This chain is Histone H3 type 3 (ch3-IV), found in Chlamydomonas reinhardtii (Chlamydomonas smithii).